The primary structure comprises 490 residues: Apocarotenoid-15,15'-oxygenase (490 aa).

His183 lines the Fe cation pocket. Residue Ser206 coordinates substrate. A Fe cation-binding site is contributed by His238. Substrate is bound at residue Phe303. His304 and His484 together coordinate Fe cation.

This sequence belongs to the carotenoid oxygenase family. Fe(2+) is required as a cofactor.

It catalyses the reaction all-trans-8'-apo-beta-carotenal + O2 = (2E,4E,6E)-2,6-dimethylocta-2,4,6-trienedial + all-trans-retinal. Functionally, cleaves a number of carotenals and carotenols in the all-trans configuration at the 15-15' double bond producing retinal or retinol, respectively. Also shows activity toward lycopenals and the corresponding alcohols. Does not cleave beta-carotene or lycopene. In Synechocystis sp. (strain ATCC 27184 / PCC 6803 / Kazusa), this protein is Apocarotenoid-15,15'-oxygenase.